The chain runs to 342 residues: Zinc transporter ZIP11 (342 aa).

Helical transmembrane passes span 12-32, 44-64, 72-92, 194-214, 263-285, 290-307, and 322-342; these read LLGTFFTWGMTAAGAALVFVF, LGFAAGVMLAASYWSLLAPAV, GFGAFAFFPVAVGFTLGAAFV, IALLILAITIHNVPEGLAVGV, FWYGQLSGMVEPLAGVFGAFAVV, ILPYALAFAAGAMVYVVM, and LASWASILGFVVMMSLDVGLG.

This sequence belongs to the ZIP transporter (TC 2.A.5) family.

Its subcellular location is the cell membrane. It is found in the nucleus. The protein resides in the cytoplasm. The protein localises to the golgi apparatus. The enzyme catalyses Zn(2+)(in) = Zn(2+)(out). The catalysed reaction is Cu(2+)(in) = Cu(2+)(out). Functionally, zinc importer that regulates cytosolic zinc concentrations either via zinc influx from the extracellular compartment or efflux from intracellular organelles such as Golgi apparatus. May transport copper ions as well. The transport mechanism remains to be elucidated. The protein is Zinc transporter ZIP11 (SLC39A11) of Homo sapiens (Human).